Here is a 1152-residue protein sequence, read N- to C-terminus: Nardilysin (1152 aa).

A signal peptide spans 1–20 (MLRKVTVAAVCATRRKLCEA). Disordered stretches follow at residues 81 to 108 (LGAD…KSPS) and 133 to 208 (MEGK…KKTT). A phosphoserine mark is found at Ser86, Ser94, and Ser96. Residues 141–198 (TDDEEEEEVEEEEEDDDEDSGAEIEDDDEEGFDDEDEFDDEHDDDLDTEDNELEELEE) are compositionally biased toward acidic residues. A Zn(2+)-binding site is contributed by His234. Residue Glu237 is the Proton acceptor of the active site. Residues His238 and Glu315 each contribute to the Zn(2+) site.

It belongs to the peptidase M16 family. Interacts with BACE1 and NRG1. Requires Zn(2+) as cofactor.

It localises to the mitochondrion. Its subcellular location is the cell projection. The protein resides in the dendrite. It carries out the reaction Hydrolysis of polypeptides, preferably at -Xaa-|-Arg-Lys-, and less commonly at -Arg-|-Arg-Xaa-, in which Xaa is not Arg or Lys.. Its function is as follows. Cleaves peptide substrates on the N-terminus of arginine residues in dibasic pairs. Is a critical activator of BACE1- and ADAM17-mediated pro-neuregulin ectodomain shedding, involved in the positive regulation of axonal maturation and myelination. Required for proper functioning of 2-oxoglutarate dehydrogenase (OGDH). This chain is Nardilysin, found in Pongo abelii (Sumatran orangutan).